A 310-amino-acid polypeptide reads, in one-letter code: Nuclear hormone receptor family member nhr-89 (310 aa).

The segment at residues 5–79 (EGPCRVCHSV…SGMRRDCVRK (75 aa)) is a DNA-binding region (nuclear receptor). 2 NR C4-type zinc fingers span residues 8–29 (CRVC…CMSC) and 43–67 (CPAN…YNKC). Positions 101–310 (KLSESYEELL…TLHQKYQIPF (210 aa)) constitute an NR LBD domain.

This sequence belongs to the nuclear hormone receptor family.

The protein resides in the nucleus. Its function is as follows. Orphan nuclear receptor. The sequence is that of Nuclear hormone receptor family member nhr-89 (nhr-89) from Caenorhabditis elegans.